A 198-amino-acid polypeptide reads, in one-letter code: MLQQIYDFLNINYNVSRETFNKFKEYYSLLSKWNSTINLVSATTLQNFWQRHIFDSIQLLNYIHNKDIIVADLGSGAGFPGVVLSISGIKNVILIESDSRKAAFLLQVAQLSDQKIEIINDRIQNLKVKCDIVTVRALANLSTILSHTKQFTVKDKYLILKGKNYQHEITQALLHNKFNYRLYKSCTDDSSWILEIKI.

S-adenosyl-L-methionine contacts are provided by residues Gly74, Phe79, 123–124 (IQ), and Arg136.

It belongs to the methyltransferase superfamily. RNA methyltransferase RsmG family.

It localises to the cytoplasm. It carries out the reaction guanosine(527) in 16S rRNA + S-adenosyl-L-methionine = N(7)-methylguanosine(527) in 16S rRNA + S-adenosyl-L-homocysteine. Functionally, specifically methylates the N7 position of guanine in position 527 of 16S rRNA. In Orientia tsutsugamushi (strain Ikeda) (Rickettsia tsutsugamushi), this protein is Ribosomal RNA small subunit methyltransferase G.